The sequence spans 493 residues: Ketol-acid reductoisomerase (NADP(+)) (493 aa).

The KARI N-terminal Rossmann domain maps to 17–208 (LGKCRFMKRE…GGDRAGVLES (192 aa)). NADP(+)-binding positions include 45–48 (CGAQ), Arg-68, Arg-76, Ser-78, and 108–110 (DKQ). The active site involves His-132. An NADP(+)-binding site is contributed by Gly-158. KARI C-terminal knotted domains follow at residues 209-353 (SFIA…SEQE) and 354-486 (YYDK…MTDM). Mg(2+)-binding residues include Asp-217, Glu-221, Glu-389, and Glu-393. Ser-414 provides a ligand contact to substrate.

This sequence belongs to the ketol-acid reductoisomerase family. Mg(2+) is required as a cofactor.

It carries out the reaction (2R)-2,3-dihydroxy-3-methylbutanoate + NADP(+) = (2S)-2-acetolactate + NADPH + H(+). It catalyses the reaction (2R,3R)-2,3-dihydroxy-3-methylpentanoate + NADP(+) = (S)-2-ethyl-2-hydroxy-3-oxobutanoate + NADPH + H(+). Its pathway is amino-acid biosynthesis; L-isoleucine biosynthesis; L-isoleucine from 2-oxobutanoate: step 2/4. The protein operates within amino-acid biosynthesis; L-valine biosynthesis; L-valine from pyruvate: step 2/4. Its function is as follows. Involved in the biosynthesis of branched-chain amino acids (BCAA). Catalyzes an alkyl-migration followed by a ketol-acid reduction of (S)-2-acetolactate (S2AL) to yield (R)-2,3-dihydroxy-isovalerate. In the isomerase reaction, S2AL is rearranged via a Mg-dependent methyl migration to produce 3-hydroxy-3-methyl-2-ketobutyrate (HMKB). In the reductase reaction, this 2-ketoacid undergoes a metal-dependent reduction by NADPH to yield (R)-2,3-dihydroxy-isovalerate. The sequence is that of Ketol-acid reductoisomerase (NADP(+)) from Colwellia psychrerythraea (strain 34H / ATCC BAA-681) (Vibrio psychroerythus).